The primary structure comprises 597 residues: MDHIRNFSIIAHIDHGKSTLADRIIQVCGGLAAREMEAQVLDSMDIERERGITIKAQTAALSYRARDGKVYNLNLIDTPGHVDFSYEVSRSLSACEGALLVVDASQGVEAQTVANCYTAIELGVEVVPVLNKIDLPAANPENAIEEIEDVIGIDATDATRCSAKTGLGVEDVLEALIAKVPPPKGDPAAPLQALIIDSWFDNYVGVVMLVRIVNGTLRPKDKIKMMATGAQYPVEHVGVFTPKSRNLESLSAGQVGFIIAGIKELTAAKVGDTVTHVAKPATEPLPGFKEVKPQVFAGLYPVEANQYDALRESLEKLKLNDASLQYEPEVSQALGFGFRCGFLGLLHMEIVQERLEREFDMDLITTAPTVVYEVVQSDGSTIMVENPAKMPEPGRIAEVREPIVTVNLYMPQDYVGSVITLCEQKRGSQINMQYHGRQVQLTYEIPMAEIVLDFFDRLKSVSRGYASMDYEFKEYRSSDVVKVDMLINGDKVDALSIIVHRSQSQYRGREVAAKMREIIPRQMYDVAIQAAIGAHIVARENIKALRKNVLAKCYGGDITRKKKLLEKQKEGKKRMKQVGSVEIPQEAFLAILRVEDK.

One can recognise a tr-type G domain in the interval 2–184; sequence DHIRNFSIIA…ALIAKVPPPK (183 aa). Residues 14–19 and 131–134 each bind GTP; these read DHGKST and NKID.

Belongs to the TRAFAC class translation factor GTPase superfamily. Classic translation factor GTPase family. LepA subfamily.

The protein resides in the cell inner membrane. It catalyses the reaction GTP + H2O = GDP + phosphate + H(+). Required for accurate and efficient protein synthesis under certain stress conditions. May act as a fidelity factor of the translation reaction, by catalyzing a one-codon backward translocation of tRNAs on improperly translocated ribosomes. Back-translocation proceeds from a post-translocation (POST) complex to a pre-translocation (PRE) complex, thus giving elongation factor G a second chance to translocate the tRNAs correctly. Binds to ribosomes in a GTP-dependent manner. This Burkholderia vietnamiensis (strain G4 / LMG 22486) (Burkholderia cepacia (strain R1808)) protein is Elongation factor 4.